Here is a 240-residue protein sequence, read N- to C-terminus: MMNIGVIFAGGVGRRMNTKGKPKQFLEVHGKPIIVHTIDIFQNTEAIDAVVVVCVSDWLDYMNNLVERFNLTKVKAVVAGGETGQMSIFKGLEAAEQLATDDAVVLIHDGVRPLINEEVINANIQSVKETGSAVTSVRAKETVVLVNDSSKISEVVDRTRSFIAKAPQSFYLSDILSVERDAISKGITDAIDSSTLMGMYNRELTIVEGPYENIKITTPDDFYMFKALYDARENEQIYGM.

CTP contacts are provided by residues 8 to 11 (FAGG) and 81 to 87 (GETGQMS).

This sequence belongs to the IspD/TarI cytidylyltransferase family. TarI subfamily.

The enzyme catalyses D-ribitol 5-phosphate + CTP + H(+) = CDP-L-ribitol + diphosphate. Its pathway is cell wall biogenesis; poly(ribitol phosphate) teichoic acid biosynthesis. Catalyzes the transfer of the cytidylyl group of CTP to D-ribitol 5-phosphate. In Streptococcus agalactiae serotype V (strain ATCC BAA-611 / 2603 V/R), this protein is Ribitol-5-phosphate cytidylyltransferase.